A 376-amino-acid polypeptide reads, in one-letter code: Heptahelical transmembrane protein ADIPOR1 (376 aa).

At 1–90 (MGEEAAMATM…LSLFSWHNET (90 aa)) the chain is on the cytoplasmic side. The segment at 20 to 46 (PAAAPAPAKGGGSKKKRKQQKREEKRK) is disordered. Residues 91-111 (INIWTHLLGFVLFFGLTVLHL) form a helical membrane-spanning segment. Topologically, residues 112–179 (GQYFPQVADL…AAAAATTRWP (68 aa)) are extracellular. A helical transmembrane segment spans residues 180-200 (FFVFLAGAMFCLLSSAACHLL). Over 201–216 (SCHSHRLNLFLIRLDY) the chain is Cytoplasmic. The helical transmembrane segment at 217-237 (TGIAVMIVVSFFPPIYYIFQC) threads the bilayer. Topologically, residues 238 to 240 (EPR) are extracellular. Residues 241-261 (WQVVYLSAITAAGVATVYALM) traverse the membrane as a helical segment. The Cytoplasmic portion of the chain corresponds to 262–274 (SPRLSAARYRAHR). The chain crosses the membrane as a helical span at residues 275 to 295 (ALLFVAMGLSGVVPAAHAVAV). The Extracellular portion of the chain corresponds to 296–303 (NWHEPRRN). Residues 304–324 (VTLAYEGAMAASYLAGTAFYL) traverse the membrane as a helical segment. Topologically, residues 325-344 (TRVPERWRPGMFDLCGHSHQ) are cytoplasmic. The chain crosses the membrane as a helical span at residues 345-365 (IFHALVIAGALAHYAAAIVFI). The Extracellular portion of the chain corresponds to 366 to 376 (QARDEMGCPAP).

Belongs to the ADIPOR family.

Its subcellular location is the membrane. May play a role in abiotic stress response. The protein is Heptahelical transmembrane protein ADIPOR1 (ADIPOR1) of Oryza sativa subsp. japonica (Rice).